Here is a 272-residue protein sequence, read N- to C-terminus: 3-methyl-2-oxobutanoate hydroxymethyltransferase (272 aa).

Mg(2+) contacts are provided by Asp-43 and Asp-82. Residues 43–44, Asp-82, and Lys-112 each bind 3-methyl-2-oxobutanoate; that span reads DS. Glu-114 is a binding site for Mg(2+). Glu-179 functions as the Proton acceptor in the catalytic mechanism.

This sequence belongs to the PanB family. Homodecamer; pentamer of dimers. Mg(2+) serves as cofactor.

It localises to the cytoplasm. It catalyses the reaction 3-methyl-2-oxobutanoate + (6R)-5,10-methylene-5,6,7,8-tetrahydrofolate + H2O = 2-dehydropantoate + (6S)-5,6,7,8-tetrahydrofolate. The protein operates within cofactor biosynthesis; (R)-pantothenate biosynthesis; (R)-pantoate from 3-methyl-2-oxobutanoate: step 1/2. In terms of biological role, catalyzes the reversible reaction in which hydroxymethyl group from 5,10-methylenetetrahydrofolate is transferred onto alpha-ketoisovalerate to form ketopantoate. This Staphylococcus aureus (strain MRSA252) protein is 3-methyl-2-oxobutanoate hydroxymethyltransferase.